We begin with the raw amino-acid sequence, 729 residues long: Fatty acid oxidation complex subunit alpha (729 aa).

Residues 1-189 (MLYKGDTLYL…KIGLVDGVVK (189 aa)) are enoyl-CoA hydratase/isomerase. Position 296 (Asp-296) interacts with substrate. Residues 311–729 (ETPKQAAVLG…ARPVGDLKTA (419 aa)) form a 3-hydroxyacyl-CoA dehydrogenase region. NAD(+) contacts are provided by residues Met-324, Asp-343, 400–402 (VVE), Lys-407, and Ser-429. His-450 (for 3-hydroxyacyl-CoA dehydrogenase activity) is an active-site residue. NAD(+) is bound at residue Asn-453. Residues Asn-500 and Tyr-660 each contribute to the substrate site. The tract at residues 708-729 (RHNEPYYPPVEPARPVGDLKTA) is disordered.

The protein in the N-terminal section; belongs to the enoyl-CoA hydratase/isomerase family. It in the C-terminal section; belongs to the 3-hydroxyacyl-CoA dehydrogenase family. In terms of assembly, heterotetramer of two alpha chains (FadB) and two beta chains (FadA).

It carries out the reaction a (3S)-3-hydroxyacyl-CoA + NAD(+) = a 3-oxoacyl-CoA + NADH + H(+). The catalysed reaction is a (3S)-3-hydroxyacyl-CoA = a (2E)-enoyl-CoA + H2O. It catalyses the reaction a 4-saturated-(3S)-3-hydroxyacyl-CoA = a (3E)-enoyl-CoA + H2O. The enzyme catalyses (3S)-3-hydroxybutanoyl-CoA = (3R)-3-hydroxybutanoyl-CoA. It carries out the reaction a (3Z)-enoyl-CoA = a 4-saturated (2E)-enoyl-CoA. The catalysed reaction is a (3E)-enoyl-CoA = a 4-saturated (2E)-enoyl-CoA. Its pathway is lipid metabolism; fatty acid beta-oxidation. In terms of biological role, involved in the aerobic and anaerobic degradation of long-chain fatty acids via beta-oxidation cycle. Catalyzes the formation of 3-oxoacyl-CoA from enoyl-CoA via L-3-hydroxyacyl-CoA. It can also use D-3-hydroxyacyl-CoA and cis-3-enoyl-CoA as substrate. The polypeptide is Fatty acid oxidation complex subunit alpha (Escherichia coli (strain SMS-3-5 / SECEC)).